Consider the following 79-residue polypeptide: RNA-binding protein Hfq (79 aa).

The 61-residue stretch at 10 to 70 (DVFLNTVRKQ…ISTIMPGQPV (61 aa)) folds into the Sm domain.

This sequence belongs to the Hfq family. As to quaternary structure, homohexamer.

Functionally, RNA chaperone that binds small regulatory RNA (sRNAs) and mRNAs to facilitate mRNA translational regulation in response to envelope stress, environmental stress and changes in metabolite concentrations. Also binds with high specificity to tRNAs. The chain is RNA-binding protein Hfq from Bartonella henselae (strain ATCC 49882 / DSM 28221 / CCUG 30454 / Houston 1) (Rochalimaea henselae).